The chain runs to 194 residues: Inosine triphosphate pyrophosphatase (194 aa).

Residue T10–K15 coordinates ITP. Residue E41 coordinates Mg(2+). ITP is bound by residues K54, D72–T73, K89, F147–D150, K172, and Q177–R178.

Belongs to the HAM1 NTPase family. As to quaternary structure, homodimer. Mg(2+) serves as cofactor. The cofactor is Mn(2+).

It is found in the cytoplasm. Its subcellular location is the nucleus. The enzyme catalyses ITP + H2O = IMP + diphosphate + H(+). It catalyses the reaction dITP + H2O = dIMP + diphosphate + H(+). It carries out the reaction XTP + H2O = XMP + diphosphate + H(+). Functionally, pyrophosphatase that hydrolyzes non-canonical purine nucleotides such as inosine triphosphate (ITP), deoxyinosine triphosphate (dITP) or xanthosine 5'-triphosphate (XTP) to their respective monophosphate derivatives. The enzyme does not distinguish between the deoxy- and ribose forms. Probably excludes non-canonical purines from RNA and DNA precursor pools, thus preventing their incorporation into RNA and DNA and avoiding chromosomal lesions. This chain is Inosine triphosphate pyrophosphatase, found in Kluyveromyces lactis (strain ATCC 8585 / CBS 2359 / DSM 70799 / NBRC 1267 / NRRL Y-1140 / WM37) (Yeast).